The chain runs to 338 residues: Nuclear hormone receptor family member nhr-108 (338 aa).

Residues 7–82 (NQPCMVCGEI…IGMLEKVVAS (76 aa)) constitute a DNA-binding region (nuclear receptor). The NR C4-type zinc-finger motif lies at 10 to 30 (CMVCGEISYSIRFGAVSCRAC). An NR C4-type; degenerate zinc finger spans residues 46 to 65 (KRCNGACDLGKYHRKTCQSC). Positions 92 to 338 (NNQTILSGLE…QCPLYEATNE (247 aa)) constitute an NR LBD domain.

This sequence belongs to the nuclear hormone receptor family.

The protein localises to the nucleus. Its function is as follows. Orphan nuclear receptor. This is Nuclear hormone receptor family member nhr-108 (nhr-108) from Caenorhabditis elegans.